Reading from the N-terminus, the 308-residue chain is Testis-specific Y-encoded protein 3 (308 aa).

This sequence belongs to the nucleosome assembly protein (NAP) family.

Its subcellular location is the cytoplasm. The protein localises to the nucleus. May be involved in sperm differentiation and proliferation. The sequence is that of Testis-specific Y-encoded protein 3 (TSPY3) from Homo sapiens (Human).